Consider the following 140-residue polypeptide: Nucleoside diphosphate kinase (140 aa).

K11, F59, R87, T93, R104, and N114 together coordinate ATP. The Pros-phosphohistidine intermediate role is filled by H117.

It belongs to the NDK family. Homotetramer. It depends on Mg(2+) as a cofactor.

The protein localises to the cytoplasm. The catalysed reaction is a 2'-deoxyribonucleoside 5'-diphosphate + ATP = a 2'-deoxyribonucleoside 5'-triphosphate + ADP. The enzyme catalyses a ribonucleoside 5'-diphosphate + ATP = a ribonucleoside 5'-triphosphate + ADP. Major role in the synthesis of nucleoside triphosphates other than ATP. The ATP gamma phosphate is transferred to the NDP beta phosphate via a ping-pong mechanism, using a phosphorylated active-site intermediate. This chain is Nucleoside diphosphate kinase, found in Erythrobacter litoralis (strain HTCC2594).